The primary structure comprises 306 residues: Oxygen-dependent coproporphyrinogen-III oxidase (306 aa).

A substrate-binding site is contributed by Ser99. 2 residues coordinate a divalent metal cation: His103 and His113. The active-site Proton donor is the His113. Substrate is bound at residue 115 to 117; sequence NVR. Residues His152 and His182 each contribute to the a divalent metal cation site. Positions 247 to 282 are important for dimerization; sequence YVEFNLVFDRGTLFGLQSGGRTESILMSMPPVANWR. 265-267 contacts substrate; that stretch reads GGR.

It belongs to the aerobic coproporphyrinogen-III oxidase family. Homodimer. A divalent metal cation serves as cofactor.

It localises to the cytoplasm. The enzyme catalyses coproporphyrinogen III + O2 + 2 H(+) = protoporphyrinogen IX + 2 CO2 + 2 H2O. It functions in the pathway porphyrin-containing compound metabolism; protoporphyrin-IX biosynthesis; protoporphyrinogen-IX from coproporphyrinogen-III (O2 route): step 1/1. In terms of biological role, involved in the heme biosynthesis. Catalyzes the aerobic oxidative decarboxylation of propionate groups of rings A and B of coproporphyrinogen-III to yield the vinyl groups in protoporphyrinogen-IX. This is Oxygen-dependent coproporphyrinogen-III oxidase from Burkholderia ambifaria (strain MC40-6).